The following is a 1063-amino-acid chain: Valine--tRNA ligase, mitochondrial (1063 aa).

The N-terminal 26 residues, 1-26, are a transit peptide targeting the mitochondrion; it reads MPHLPLASFRPPFWGLRHSRGLPRFH. A disordered region spans residues 25–53; the sequence is FHSVSTQSEPHGSPISRRNREAKQKRLRE. The segment covering 42 to 53 has biased composition (basic and acidic residues); sequence RNREAKQKRLRE. The short motif at 146–156 is the 'HIGH' region element; that stretch reads PNVTGSLHIGH. Positions 658-662 match the 'KMSKS' region motif; the sequence is KMSKS. Lys-661 lines the ATP pocket.

Belongs to the class-I aminoacyl-tRNA synthetase family.

It localises to the mitochondrion. It catalyses the reaction tRNA(Val) + L-valine + ATP = L-valyl-tRNA(Val) + AMP + diphosphate. Its function is as follows. Catalyzes the attachment of valine to tRNA(Val) in a two-step reaction: valine is first activated by ATP to form Val-AMP and then transferred to the acceptor end of tRNA(Val). The chain is Valine--tRNA ligase, mitochondrial (VARS2) from Homo sapiens (Human).